A 286-amino-acid chain; its full sequence is ATP synthase gamma chain (286 aa).

This sequence belongs to the ATPase gamma chain family. F-type ATPases have 2 components, CF(1) - the catalytic core - and CF(0) - the membrane proton channel. CF(1) has five subunits: alpha(3), beta(3), gamma(1), delta(1), epsilon(1). CF(0) has three main subunits: a, b and c.

The protein localises to the cell membrane. In terms of biological role, produces ATP from ADP in the presence of a proton gradient across the membrane. The gamma chain is believed to be important in regulating ATPase activity and the flow of protons through the CF(0) complex. This chain is ATP synthase gamma chain, found in Bacillus anthracis (strain A0248).